A 178-amino-acid chain; its full sequence is Small ribosomal subunit protein uS5 (178 aa).

One can recognise an S5 DRBM domain in the interval phenylalanine 15–valine 78.

It belongs to the universal ribosomal protein uS5 family. Part of the 30S ribosomal subunit. Contacts proteins S4 and S8.

With S4 and S12 plays an important role in translational accuracy. Its function is as follows. Located at the back of the 30S subunit body where it stabilizes the conformation of the head with respect to the body. The protein is Small ribosomal subunit protein uS5 of Thermotoga sp. (strain RQ2).